The primary structure comprises 57 residues: Potassium channel toxin alpha-KTx 17.2 (57 aa).

The first 26 residues, 1–26 (MKTIIVLLLLTIVAAAVVESSPKARR), serve as a signal peptide directing secretion. Cystine bridges form between Cys30–Cys46, Cys36–Cys51, and Cys40–Cys53.

The protein belongs to the short scorpion toxin superfamily. Potassium channel inhibitor family. Alpha-KTx 17 subfamily. In terms of tissue distribution, expressed by the venom gland.

Its subcellular location is the secreted. In terms of biological role, inhibits voltage-gated potassium channels. The polypeptide is Potassium channel toxin alpha-KTx 17.2 (Lychas mucronatus (Chinese swimming scorpion)).